Consider the following 572-residue polypeptide: Bilirubin oxidase (572 aa).

Positions 1–19 (MFKHTLGAAALSLLFNSNA) are cleaved as a signal peptide. Positions 20 to 38 (VQASPVPETSPATGHLFKR) are excised as a propeptide. Plastocyanin-like domains lie at 98 to 194 (VGYD…YMLT) and 404 to 526 (VAFA…VFVD). Cu cation is bound by residues His-132, His-134, His-172, His-174, His-436, His-439, His-441, His-494, Cys-495, His-496, His-500, and Met-505. 2 N-linked (GlcNAc...) asparagine glycosylation sites follow: Asn-510 and Asn-520.

The protein belongs to the multicopper oxidase family. Cu cation serves as cofactor.

The catalysed reaction is 2 (4Z,15Z)-bilirubin IXalpha + O2 = 2 biliverdin IXalpha + 2 H2O. Functionally, oxidation of bilirubin and other tetrapyrroles. The polypeptide is Bilirubin oxidase (Albifimbria verrucaria (Myrothecium leaf spot and pod blight fungus)).